We begin with the raw amino-acid sequence, 274 residues long: MKIELASSYGFCFGVKRAIKIAENAGDAATIGPLIHNNEEINRLATNFNVKTLHGINELKDEKKAIIRTHGITKSDLAELKKTDIKVIDATCPFVTKPQQICEDMSNAGYDVVIFGDENHPEVKGVKSYASGKVYVVLDESELEGVKFRQKVALVSQTTRKVEKFMQIANYLMLRVKEVRVFNTICNATFENQEAVKNLAKRADVMIVIGGKNSSNTKQLYLISKNFCEDSYLIESEHEVEKSWFEGKNLCGISAGASTPDWIIQKVVDAIEKF.

[4Fe-4S] cluster is bound at residue cysteine 12. Residues histidine 36 and histidine 70 each contribute to the (2E)-4-hydroxy-3-methylbut-2-enyl diphosphate site. Residues histidine 36 and histidine 70 each contribute to the dimethylallyl diphosphate site. The isopentenyl diphosphate site is built by histidine 36 and histidine 70. Cysteine 92 serves as a coordination point for [4Fe-4S] cluster. Position 120 (histidine 120) interacts with (2E)-4-hydroxy-3-methylbut-2-enyl diphosphate. A dimethylallyl diphosphate-binding site is contributed by histidine 120. Histidine 120 is an isopentenyl diphosphate binding site. The active-site Proton donor is glutamate 122. Threonine 158 contributes to the (2E)-4-hydroxy-3-methylbut-2-enyl diphosphate binding site. Cysteine 186 contributes to the [4Fe-4S] cluster binding site. Serine 214, serine 215, asparagine 216, and serine 258 together coordinate (2E)-4-hydroxy-3-methylbut-2-enyl diphosphate. 4 residues coordinate dimethylallyl diphosphate: serine 214, serine 215, asparagine 216, and serine 258. Residues serine 214, serine 215, asparagine 216, and serine 258 each coordinate isopentenyl diphosphate.

The protein belongs to the IspH family. It depends on [4Fe-4S] cluster as a cofactor.

The catalysed reaction is isopentenyl diphosphate + 2 oxidized [2Fe-2S]-[ferredoxin] + H2O = (2E)-4-hydroxy-3-methylbut-2-enyl diphosphate + 2 reduced [2Fe-2S]-[ferredoxin] + 2 H(+). It catalyses the reaction dimethylallyl diphosphate + 2 oxidized [2Fe-2S]-[ferredoxin] + H2O = (2E)-4-hydroxy-3-methylbut-2-enyl diphosphate + 2 reduced [2Fe-2S]-[ferredoxin] + 2 H(+). It participates in isoprenoid biosynthesis; dimethylallyl diphosphate biosynthesis; dimethylallyl diphosphate from (2E)-4-hydroxy-3-methylbutenyl diphosphate: step 1/1. It functions in the pathway isoprenoid biosynthesis; isopentenyl diphosphate biosynthesis via DXP pathway; isopentenyl diphosphate from 1-deoxy-D-xylulose 5-phosphate: step 6/6. Catalyzes the conversion of 1-hydroxy-2-methyl-2-(E)-butenyl 4-diphosphate (HMBPP) into a mixture of isopentenyl diphosphate (IPP) and dimethylallyl diphosphate (DMAPP). Acts in the terminal step of the DOXP/MEP pathway for isoprenoid precursor biosynthesis. This chain is 4-hydroxy-3-methylbut-2-enyl diphosphate reductase, found in Campylobacter curvus (strain 525.92).